Reading from the N-terminus, the 197-residue chain is uncharacterized protein (197 aa).

An N-terminal signal peptide occupies residues 1 to 23; that stretch reads MSARAPKELRLALPPCLLNRTFA. The Extracellular portion of the chain corresponds to 24–61; the sequence is SPNASGSGNTGARGPGAVGSGTCITQVGQQLFQSFSST. A glycan (N-linked (GlcNAc...) asparagine) is linked at N26. A helical transmembrane segment spans residues 62-82; it reads LVLIVLVTLIFCLIVLSLSTF. Over 83–197 the chain is Cytoplasmic; the sequence is HIHKRRMKKR…EGLLQTVVLS (115 aa). A disordered region spans residues 94–180; that stretch reads MQRAQEEYER…SSPQGAHAAS (87 aa). 2 stretches are compositionally biased toward basic and acidic residues: residues 96-107 and 125-136; these read RAQEEYERDHCS and HAKETRLERQPR. A compositionally biased stretch (low complexity) spans 141–161; the sequence is CAPSNASSLSSSSPGLPCQGP. Over residues 162 to 171 the composition is skewed to pro residues; sequence CAPPPPPPAS.

Its subcellular location is the membrane. This is an uncharacterized protein from Homo sapiens (Human).